The primary structure comprises 253 residues: Sulfate transporter CysZ (253 aa).

A run of 4 helical transmembrane segments spans residues 31-51 (FVILPLLVNILLMGGAFWWLF), 75-95 (LLWPIAVISVLLVFGYFFSTI), 151-171 (IVLLILYFIPGVGQTVAPVLW), and 222-242 (IPVLNLVIMPVAVCGATAMWV).

This sequence belongs to the CysZ family.

The protein localises to the cell inner membrane. Its function is as follows. High affinity, high specificity proton-dependent sulfate transporter, which mediates sulfate uptake. Provides the sulfur source for the cysteine synthesis pathway. This chain is Sulfate transporter CysZ, found in Citrobacter koseri (strain ATCC BAA-895 / CDC 4225-83 / SGSC4696).